The primary structure comprises 413 residues: Serine hydroxymethyltransferase (413 aa).

(6S)-5,6,7,8-tetrahydrofolate is bound by residues leucine 119 and glycine 123–leucine 125. Lysine 228 bears the N6-(pyridoxal phosphate)lysine mark. Position 351–353 (serine 351–phenylalanine 353) interacts with (6S)-5,6,7,8-tetrahydrofolate.

It belongs to the SHMT family. Homodimer. Requires pyridoxal 5'-phosphate as cofactor.

Its subcellular location is the cytoplasm. The catalysed reaction is (6R)-5,10-methylene-5,6,7,8-tetrahydrofolate + glycine + H2O = (6S)-5,6,7,8-tetrahydrofolate + L-serine. Its pathway is one-carbon metabolism; tetrahydrofolate interconversion. The protein operates within amino-acid biosynthesis; glycine biosynthesis; glycine from L-serine: step 1/1. Functionally, catalyzes the reversible interconversion of serine and glycine with tetrahydrofolate (THF) serving as the one-carbon carrier. This reaction serves as the major source of one-carbon groups required for the biosynthesis of purines, thymidylate, methionine, and other important biomolecules. Also exhibits THF-independent aldolase activity toward beta-hydroxyamino acids, producing glycine and aldehydes, via a retro-aldol mechanism. The chain is Serine hydroxymethyltransferase from Anoxybacillus flavithermus (strain DSM 21510 / WK1).